The primary structure comprises 833 residues: Phenylalanine--tRNA ligase beta subunit (833 aa).

The tRNA-binding domain maps to 42 to 157; sequence ADLKGPLAVG…PEYEVGTDAI (116 aa). Positions 411–485 constitute a B5 domain; the sequence is SAPHTITIPA…RLEGYENLPS (75 aa). Mg(2+) contacts are provided by aspartate 463, aspartate 469, glutamate 472, and glutamate 473. The FDX-ACB domain maps to 739–832; the sequence is STFPVATQDV…AAERTGAALR (94 aa).

Belongs to the phenylalanyl-tRNA synthetase beta subunit family. Type 1 subfamily. Tetramer of two alpha and two beta subunits. Requires Mg(2+) as cofactor.

Its subcellular location is the cytoplasm. It carries out the reaction tRNA(Phe) + L-phenylalanine + ATP = L-phenylalanyl-tRNA(Phe) + AMP + diphosphate + H(+). In Streptomyces avermitilis (strain ATCC 31267 / DSM 46492 / JCM 5070 / NBRC 14893 / NCIMB 12804 / NRRL 8165 / MA-4680), this protein is Phenylalanine--tRNA ligase beta subunit.